Reading from the N-terminus, the 389-residue chain is S-adenosylmethionine synthase (389 aa).

Histidine 19 is a binding site for ATP. Residue aspartate 21 coordinates Mg(2+). Residue glutamate 47 coordinates K(+). 2 residues coordinate L-methionine: glutamate 60 and glutamine 103. The tract at residues 103-113 is flexible loop; it reads QSGDIAQGVDR. Residues 168–170, 234–235, aspartate 243, 249–250, alanine 266, and lysine 270 contribute to the ATP site; these read DGK, RF, and RK. Aspartate 243 contributes to the L-methionine binding site. Residue lysine 274 participates in L-methionine binding.

It belongs to the AdoMet synthase family. In terms of assembly, homotetramer; dimer of dimers. The cofactor is Mg(2+). It depends on K(+) as a cofactor.

It is found in the cytoplasm. The catalysed reaction is L-methionine + ATP + H2O = S-adenosyl-L-methionine + phosphate + diphosphate. It functions in the pathway amino-acid biosynthesis; S-adenosyl-L-methionine biosynthesis; S-adenosyl-L-methionine from L-methionine: step 1/1. Functionally, catalyzes the formation of S-adenosylmethionine (AdoMet) from methionine and ATP. The overall synthetic reaction is composed of two sequential steps, AdoMet formation and the subsequent tripolyphosphate hydrolysis which occurs prior to release of AdoMet from the enzyme. This Nitratidesulfovibrio vulgaris (strain DSM 19637 / Miyazaki F) (Desulfovibrio vulgaris) protein is S-adenosylmethionine synthase.